The chain runs to 428 residues: GTPase Obg (428 aa).

One can recognise an Obg domain in the interval 1–158 (MFVDQVKIYV…RDVILELKVL (158 aa)). The OBG-type G domain occupies 159–329 (ADVGLVGFPS…LLFEVANLIE (171 aa)). GTP is bound by residues 165–172 (GFPSVGKS), 190–194 (FTTIV), 212–215 (DLPG), 282–285 (NKMD), and 310–312 (SAV). Positions 172 and 192 each coordinate Mg(2+). Residues 350–428 (KFDTEGVKFE…ILEYEFEFID (79 aa)) form the OCT domain.

This sequence belongs to the TRAFAC class OBG-HflX-like GTPase superfamily. OBG GTPase family. As to quaternary structure, monomer. Requires Mg(2+) as cofactor.

It localises to the cytoplasm. In terms of biological role, an essential GTPase which binds GTP, GDP and possibly (p)ppGpp with moderate affinity, with high nucleotide exchange rates and a fairly low GTP hydrolysis rate. Plays a role in control of the cell cycle, stress response, ribosome biogenesis and in those bacteria that undergo differentiation, in morphogenesis control. The protein is GTPase Obg of Bacillus cereus (strain ATCC 14579 / DSM 31 / CCUG 7414 / JCM 2152 / NBRC 15305 / NCIMB 9373 / NCTC 2599 / NRRL B-3711).